We begin with the raw amino-acid sequence, 466 residues long: Histone acetyltransferase type B catalytic subunit DDB_G0275159 (466 aa).

Positions Ala-169–Tyr-366 constitute an N-acetyltransferase domain. Acetyl-CoA-binding positions include Tyr-240–Ile-242 and Gln-247–Lys-253. The Proton donor/acceptor role is filled by Glu-279. The stretch at Asp-372–Ser-459 forms a coiled coil.

Belongs to the HAT1 family.

It carries out the reaction L-lysyl-[protein] + acetyl-CoA = N(6)-acetyl-L-lysyl-[protein] + CoA + H(+). The protein is Histone acetyltransferase type B catalytic subunit DDB_G0275159 of Dictyostelium discoideum (Social amoeba).